A 326-amino-acid polypeptide reads, in one-letter code: Ribosomal large subunit pseudouridine synthase D (326 aa).

The S4 RNA-binding domain occupies 18 to 91 (QRLDQALAEM…IPLDIVYEDE (74 aa)). The active site involves D139.

It belongs to the pseudouridine synthase RluA family. As to quaternary structure, in late stage pre-50S ribosomal subunit interacts with ObgE and DarP(YjgA).

Its subcellular location is the cytoplasm. It catalyses the reaction uridine(1911/1915/1917) in 23S rRNA = pseudouridine(1911/1915/1917) in 23S rRNA. Functionally, responsible for synthesis of pseudouridine from uracil at positions 1911, 1915 and 1917 in 23S ribosomal RNA. Other positions are not modified. Uridine isomerization occurs as a late step during the assembly of the large ribosomal subunit. Member of a network of 50S ribosomal subunit biogenesis factors (ObgE, RluD, RsfS and DarP(YjgA)) which assembles along the 30S-50S interface, allowing 23S rRNA modification and preventing incorrect 23S rRNA structures from forming. This chain is Ribosomal large subunit pseudouridine synthase D, found in Escherichia coli (strain K12).